Here is a 692-residue protein sequence, read N- to C-terminus: Polyphosphate kinase (692 aa).

An ATP-binding site is contributed by Asn-57. Positions 383 and 413 each coordinate Mg(2+). The active-site Phosphohistidine intermediate is the His-443. Residues Tyr-476, Arg-572, and His-600 each contribute to the ATP site.

It belongs to the polyphosphate kinase 1 (PPK1) family. The cofactor is Mg(2+). Post-translationally, an intermediate of this reaction is the autophosphorylated ppk in which a phosphate is covalently linked to a histidine residue through a N-P bond.

It catalyses the reaction [phosphate](n) + ATP = [phosphate](n+1) + ADP. Its function is as follows. Catalyzes the reversible transfer of the terminal phosphate of ATP to form a long-chain polyphosphate (polyP). This chain is Polyphosphate kinase, found in Acinetobacter baumannii (strain AYE).